The following is a 314-amino-acid chain: L-lactate dehydrogenase 1 (314 aa).

Residues Val-16, Asp-37, Lys-42, Tyr-68, and 82–83 contribute to the NAD(+) site; that span reads GL. Substrate contacts are provided by residues Gln-85, Arg-91, and 123–126; that span reads NPVD. Residues 121 to 123 and Ser-146 contribute to the NAD(+) site; that span reads ATN. 151 to 154 serves as a coordination point for substrate; the sequence is DSAR. Beta-D-fructose 1,6-bisphosphate is bound by residues Arg-156 and His-171. The Proton acceptor role is filled by His-178. Tyr-223 is modified (phosphotyrosine). Thr-232 contributes to the substrate binding site.

Belongs to the LDH/MDH superfamily. LDH family. In terms of assembly, homotetramer.

It is found in the cytoplasm. It catalyses the reaction (S)-lactate + NAD(+) = pyruvate + NADH + H(+). Its pathway is fermentation; pyruvate fermentation to lactate; (S)-lactate from pyruvate: step 1/1. With respect to regulation, allosterically activated by fructose 1,6-bisphosphate (FBP). Functionally, catalyzes the conversion of lactate to pyruvate. This is L-lactate dehydrogenase 1 from Bacillus anthracis.